A 421-amino-acid chain; its full sequence is Tyrosine--tRNA ligase (421 aa).

Position 36 (Tyr-36) interacts with L-tyrosine. A 'HIGH' region motif is present at residues 41-50 (PTADSLHIGH). The L-tyrosine site is built by Tyr-170 and Gln-174. Residues 231-235 (KFGKS) carry the 'KMSKS' region motif. ATP is bound at residue Lys-234. Residues 353–420 (TNIVEALIET…KKKYFMVNYQ (68 aa)) enclose the S4 RNA-binding domain.

Belongs to the class-I aminoacyl-tRNA synthetase family. TyrS type 1 subfamily. Homodimer.

It is found in the cytoplasm. The enzyme catalyses tRNA(Tyr) + L-tyrosine + ATP = L-tyrosyl-tRNA(Tyr) + AMP + diphosphate + H(+). Catalyzes the attachment of tyrosine to tRNA(Tyr) in a two-step reaction: tyrosine is first activated by ATP to form Tyr-AMP and then transferred to the acceptor end of tRNA(Tyr). The chain is Tyrosine--tRNA ligase from Staphylococcus epidermidis (strain ATCC 35984 / DSM 28319 / BCRC 17069 / CCUG 31568 / BM 3577 / RP62A).